The chain runs to 267 residues: Imidazole glycerol phosphate synthase subunit HisF (267 aa).

Catalysis depends on residues D22 and D141.

This sequence belongs to the HisA/HisF family. Heterodimer of HisH and HisF.

It is found in the cytoplasm. It catalyses the reaction 5-[(5-phospho-1-deoxy-D-ribulos-1-ylimino)methylamino]-1-(5-phospho-beta-D-ribosyl)imidazole-4-carboxamide + L-glutamine = D-erythro-1-(imidazol-4-yl)glycerol 3-phosphate + 5-amino-1-(5-phospho-beta-D-ribosyl)imidazole-4-carboxamide + L-glutamate + H(+). Its pathway is amino-acid biosynthesis; L-histidine biosynthesis; L-histidine from 5-phospho-alpha-D-ribose 1-diphosphate: step 5/9. IGPS catalyzes the conversion of PRFAR and glutamine to IGP, AICAR and glutamate. The HisF subunit catalyzes the cyclization activity that produces IGP and AICAR from PRFAR using the ammonia provided by the HisH subunit. This Mycobacterium bovis (strain ATCC BAA-935 / AF2122/97) protein is Imidazole glycerol phosphate synthase subunit HisF.